The primary structure comprises 77 residues: uncharacterized protein (77 aa).

This is an uncharacterized protein from Homo sapiens (Human).